Reading from the N-terminus, the 423-residue chain is Maltoporin 1 (423 aa).

The N-terminal stretch at 1 to 23 (MNTTLRALSVALAAALIAPSAFA) is a signal peptide.

The protein belongs to the porin LamB (TC 1.B.3) family. In terms of assembly, homotrimer formed of three 18-stranded antiparallel beta-barrels, containing three independent channels.

The protein resides in the cell outer membrane. The enzyme catalyses beta-maltose(in) = beta-maltose(out). Functionally, involved in the transport of maltose and maltodextrins. The protein is Maltoporin 1 of Klebsiella pneumoniae subsp. pneumoniae (strain ATCC 700721 / MGH 78578).